The chain runs to 348 residues: RNA 3'-terminal phosphate cyclase (348 aa).

Residues glutamine 101 and 286–289 (HMAD) contribute to the ATP site. Catalysis depends on histidine 312, which acts as the Tele-AMP-histidine intermediate.

It belongs to the RNA 3'-terminal cyclase family. Type 1 subfamily.

The protein localises to the cytoplasm. It catalyses the reaction a 3'-end 3'-phospho-ribonucleotide-RNA + ATP = a 3'-end 2',3'-cyclophospho-ribonucleotide-RNA + AMP + diphosphate. Its function is as follows. Catalyzes the conversion of 3'-phosphate to a 2',3'-cyclic phosphodiester at the end of RNA. The mechanism of action of the enzyme occurs in 3 steps: (A) adenylation of the enzyme by ATP; (B) transfer of adenylate to an RNA-N3'P to produce RNA-N3'PP5'A; (C) and attack of the adjacent 2'-hydroxyl on the 3'-phosphorus in the diester linkage to produce the cyclic end product. The biological role of this enzyme is unknown but it is likely to function in some aspects of cellular RNA processing. In Pyrobaculum aerophilum (strain ATCC 51768 / DSM 7523 / JCM 9630 / CIP 104966 / NBRC 100827 / IM2), this protein is RNA 3'-terminal phosphate cyclase.